A 604-amino-acid chain; its full sequence is Nuclear cap-binding protein subunit 3 (604 aa).

The segment at 1 to 36 is disordered; it reads MAAVRGLRISVKAEATATTAEPRGPEPEPMEVEEGE. The segment at 116-177 is RNA recognition motif (RRM) domain; the sequence is DTIYICGVDE…MSSFPDQEKP (62 aa). The WLDD motif; essential for 7-methylguanosine-containing mRNA cap binding motif lies at 145–148; it reads WLDD. Disordered stretches follow at residues 168–219, 319–383, and 457–604; these read MSSF…DIEL, KHRH…DSDE, and QNNN…DTES. A compositionally biased stretch (basic and acidic residues) spans 173–198; sequence DQEKPKGGENNEEKTAEKNKKEKQEE. Composition is skewed to acidic residues over residues 199–219 and 331–349; these read STDD…DIEL and EPIE…DEDD. Positions 350 to 370 are enriched in basic and acidic residues; the sequence is RVVVEYRDDLQPFKQSRDRGA. Positions 458–469 are enriched in polar residues; the sequence is NNNGLRQPNSIV. Basic and acidic residues-rich tracts occupy residues 495-505, 539-548, and 569-582; these read PRREPISDVHS, TQEKTSDKPE, and IKEK…KSRL. Over residues 595–604 the composition is skewed to low complexity; the sequence is ESSSGSDTES.

The protein belongs to the NCBP3 family. Component of an alternative cap-binding complex (CBC) composed of NCBP1/CBP80 and NCBP3.

Its subcellular location is the nucleus. The protein localises to the cytoplasm. Associates with NCBP1/CBP80 to form an alternative cap-binding complex (CBC) which plays a key role in mRNA export. NCBP3 serves as adapter protein linking the capped RNAs (m7GpppG-capped RNA) to NCBP1/CBP80. Unlike the conventional CBC with NCBP2 which binds both small nuclear RNA (snRNA) and messenger (mRNA) and is involved in their export from the nucleus, the alternative CBC with NCBP3 does not bind snRNA and associates only with mRNA thereby playing a role in only mRNA export. This is Nuclear cap-binding protein subunit 3 from Gallus gallus (Chicken).